Consider the following 353-residue polypeptide: MSTSRNVPNKKNNTKQQKYQQQSQKQFKTVRATGNGEKEPFSLAMSYGHIPVVTASVHLLSSFLLRHLSFISSKEEKVFGSLTVFAAEAADKVSEHRQCLQRLINETMDSNMTSYSADVFNIQENQVKRDNGPTHYSVWYRSGNFAPNSILESNPVTLVDADAFDLIKQLTYRLGKAIFRLHNNGNSSFDIYVKDNLSNFKIYLNNLADHLEKDDIYDNFLDMVESQAKIKKDYYLNNRNLLVDNKSSNRTHHKSGDKSTVKSTDKQVEKKVEESSEKVPEVPKKIVIPKSACKPVVGGVSFAQAAGKSQTANSDTKEDQVTTSTSESTVEVKSLEVKETKEPDEEVFEDLNN.

Disordered stretches follow at residues 1 to 24 (MSTS…QQSQ), 245 to 280 (NKSS…EKVP), and 305 to 353 (AAGK…DLNN). Residues 9–24 (NKKNNTKQQKYQQQSQ) show a composition bias toward low complexity. Residues 254-280 (KSGDKSTVKSTDKQVEKKVEESSEKVP) show a composition bias toward basic and acidic residues. Over residues 321–332 (VTTSTSESTVEV) the composition is skewed to low complexity. Over residues 342–353 (EPDEEVFEDLNN) the composition is skewed to acidic residues.

This is an uncharacterized protein from Acanthamoeba polyphaga mimivirus (APMV).